The primary structure comprises 291 residues: 4-diphosphocytidyl-2-C-methyl-D-erythritol kinase (291 aa).

The active site involves Lys-11. 95–105 is a binding site for ATP; the sequence is PVAAGLAGGSS. Residue Asp-137 is part of the active site.

It belongs to the GHMP kinase family. IspE subfamily.

The catalysed reaction is 4-CDP-2-C-methyl-D-erythritol + ATP = 4-CDP-2-C-methyl-D-erythritol 2-phosphate + ADP + H(+). The protein operates within isoprenoid biosynthesis; isopentenyl diphosphate biosynthesis via DXP pathway; isopentenyl diphosphate from 1-deoxy-D-xylulose 5-phosphate: step 3/6. Catalyzes the phosphorylation of the position 2 hydroxy group of 4-diphosphocytidyl-2C-methyl-D-erythritol. The sequence is that of 4-diphosphocytidyl-2-C-methyl-D-erythritol kinase from Alkaliphilus metalliredigens (strain QYMF).